Reading from the N-terminus, the 1032-residue chain is Serine/threonine-protein kinase ppk31 (1032 aa).

Residues 3 to 72 (NPEQLKRILS…KATDNLFRKS (70 aa)) enclose the PAS domain. The region spanning 528-877 (FILLKEINRG…YQEIKKHPFF (350 aa)) is the Protein kinase domain. ATP is bound by residues 534-542 (INRGAYGRV) and lysine 557. The active-site Proton acceptor is aspartate 652. The disordered stretch occupies residues 938-963 (PKATPADSGTETSNSAAFSASEEETT). Low complexity predominate over residues 947–957 (TETSNSAAFSA).

Belongs to the protein kinase superfamily. Ser/Thr protein kinase family.

It is found in the cytoplasm. It carries out the reaction L-seryl-[protein] + ATP = O-phospho-L-seryl-[protein] + ADP + H(+). The enzyme catalyses L-threonyl-[protein] + ATP = O-phospho-L-threonyl-[protein] + ADP + H(+). Functionally, has a role in meiosis. The polypeptide is Serine/threonine-protein kinase ppk31 (ppk31) (Schizosaccharomyces pombe (strain 972 / ATCC 24843) (Fission yeast)).